The sequence spans 150 residues: Large ribosomal subunit protein bL9 (150 aa).

This sequence belongs to the bacterial ribosomal protein bL9 family.

Functionally, binds to the 23S rRNA. The protein is Large ribosomal subunit protein bL9 of Polaromonas naphthalenivorans (strain CJ2).